Here is a 569-residue protein sequence, read N- to C-terminus: AP-4 complex accessory subunit Tepsin (569 aa).

The ENTH domain maps to 8–141; it reads RDRLSFLHRL…FSDALPQPPS (134 aa). The segment at 196-298 is disordered; it reads VRPGPDNPCT…SGASREPGDL (103 aa). Residues 219–229 are compositionally biased toward polar residues; it reads VTPSASHTHPN. Over residues 260–292 the composition is skewed to low complexity; sequence SSPSSQNSSCTSNLSRASDSVSRSGSDSHSGAS. Phosphoserine is present on S400. Residues 467–524 are disordered; sequence VPRSPVPTPSPDTLPPALQDPGELRTQLVCSSEPGTGSEQRLENTDTPKDSSSPCPWS. A compositionally biased stretch (pro residues) spans 470-480; sequence SPVPTPSPDTL. Over residues 494–505 the composition is skewed to polar residues; the sequence is LVCSSEPGTGSE. Positions 506–515 are enriched in basic and acidic residues; it reads QRLENTDTPK. Residues 525-535 are interaction with AP4B1; it reads PNSLFAGMELV. Residues 559–569 form an interaction with AP4E1 region; that stretch reads SEPSAFAFLNM.

Interacts with AP4B1 and AP4E1; the interaction is direct and mediates the association of TEPSIN with the adapter-like complex 4 (AP-4), a heterotetramer composed of AP4B1, AP4E1, AP4M1 and AP4S1.

The protein localises to the golgi apparatus. Its subcellular location is the trans-Golgi network membrane. It localises to the cytoplasmic vesicle. The protein resides in the cytoplasm. It is found in the cytosol. Associates with the adapter-like complex 4 (AP-4) and may therefore play a role in vesicular trafficking of proteins at the trans-Golgi network. This is AP-4 complex accessory subunit Tepsin from Rattus norvegicus (Rat).